Here is a 389-residue protein sequence, read N- to C-terminus: Chaperone protein DnaJ (389 aa).

Positions 5–79 (KRDYYEVLGI…RKLYDQFGHE (75 aa)) constitute a J domain. A CR-type zinc finger spans residues 151 to 234 (GCNKTIKYER…CRSNKYTVTN (84 aa)). 8 residues coordinate Zn(2+): cysteine 164, cysteine 167, cysteine 182, cysteine 185, cysteine 208, cysteine 211, cysteine 222, and cysteine 225. CXXCXGXG motif repeat units follow at residues 164-171 (CHSCNGFG), 182-189 (CKDCNGNG), 208-215 (CSTCNGQG), and 222-229 (CKTCRSNK).

The protein belongs to the DnaJ family. As to quaternary structure, homodimer. Requires Zn(2+) as cofactor.

The protein resides in the cytoplasm. In terms of biological role, participates actively in the response to hyperosmotic and heat shock by preventing the aggregation of stress-denatured proteins and by disaggregating proteins, also in an autonomous, DnaK-independent fashion. Unfolded proteins bind initially to DnaJ; upon interaction with the DnaJ-bound protein, DnaK hydrolyzes its bound ATP, resulting in the formation of a stable complex. GrpE releases ADP from DnaK; ATP binding to DnaK triggers the release of the substrate protein, thus completing the reaction cycle. Several rounds of ATP-dependent interactions between DnaJ, DnaK and GrpE are required for fully efficient folding. Also involved, together with DnaK and GrpE, in the DNA replication of plasmids through activation of initiation proteins. The chain is Chaperone protein DnaJ from Mycoplasma genitalium (strain ATCC 33530 / DSM 19775 / NCTC 10195 / G37) (Mycoplasmoides genitalium).